Consider the following 245-residue polypeptide: Thiopurine S-methyltransferase (245 aa).

S14 is modified (phosphoserine). 29-40 (WQDKWVNGKTAF) provides a ligand contact to S-adenosyl-L-methionine. F40 contributes to the substrate binding site. K58 carries the post-translational modification N6-acetyllysine. S-adenosyl-L-methionine-binding positions include L69, E90, 134-135 (SI), and R152.

The protein belongs to the class I-like SAM-binding methyltransferase superfamily. TPMT family. As to quaternary structure, monomer.

The protein localises to the cytoplasm. The catalysed reaction is S-adenosyl-L-methionine + a thiopurine = S-adenosyl-L-homocysteine + a thiopurine S-methylether.. The polypeptide is Thiopurine S-methyltransferase (TPMT) (Gorilla gorilla gorilla (Western lowland gorilla)).